A 273-amino-acid chain; its full sequence is Co-chaperone protein DjlA (273 aa).

The Periplasmic segment spans residues 1–6; it reads MHYWGK. Residues 7-31 form a helical membrane-spanning segment; it reads LLGLIFGVVSGAGFWGIVIGLFIGH. Over 32 to 273 the chain is Cytoplasmic; sequence MLDRASVRGN…DLIKKEKGFK (242 aa). The 67-residue stretch at 207–273 folds into the J domain; it reads DACKVLGVRE…DLIKKEKGFK (67 aa).

In terms of assembly, homodimer.

Its subcellular location is the cell inner membrane. In terms of biological role, regulatory DnaK co-chaperone. Direct interaction between DnaK and DjlA is needed for the induction of the wcaABCDE operon, involved in the synthesis of a colanic acid polysaccharide capsule, possibly through activation of the RcsB/RcsC phosphotransfer signaling pathway. The colanic acid capsule may help the bacterium survive conditions outside the host. This Photorhabdus laumondii subsp. laumondii (strain DSM 15139 / CIP 105565 / TT01) (Photorhabdus luminescens subsp. laumondii) protein is Co-chaperone protein DjlA.